Consider the following 126-residue polypeptide: Small ribosomal subunit protein uS13 (126 aa).

The disordered stretch occupies residues 95-126 (GLPVRGQQTRTNARTRKGKRKTVGGTKKAKAK). Over residues 107–126 (ARTRKGKRKTVGGTKKAKAK) the composition is skewed to basic residues.

Belongs to the universal ribosomal protein uS13 family. As to quaternary structure, part of the 30S ribosomal subunit. Forms a loose heterodimer with protein S19. Forms two bridges to the 50S subunit in the 70S ribosome.

Functionally, located at the top of the head of the 30S subunit, it contacts several helices of the 16S rRNA. In the 70S ribosome it contacts the 23S rRNA (bridge B1a) and protein L5 of the 50S subunit (bridge B1b), connecting the 2 subunits; these bridges are implicated in subunit movement. Contacts the tRNAs in the A and P-sites. The polypeptide is Small ribosomal subunit protein uS13 (Aquifex aeolicus (strain VF5)).